Consider the following 1154-residue polypeptide: Voltage-dependent calcium channel subunit alpha-2/delta-2 (1154 aa).

The first 18 residues, 1–18 (MAVPARTCGASWPGPVRT), serve as a signal peptide directing secretion. A disordered region spans residues 1–37 (MAVPARTCGASWPGPVRTARPWPGRGPRPCPDPRGPA). The Extracellular portion of the chain corresponds to 19–1116 (ARPWPGRGPR…TEDTSDCGRG (1098 aa)). The segment covering 24 to 34 (GRGPRPCPDPR) has biased composition (pro residues). N-linked (GlcNAc...) asparagine glycosylation occurs at asparagine 205. The 179-residue stretch at 294-472 (DMVIIVDVSG…INTQEYLDVL (179 aa)) folds into the VWFA domain. 3 residues coordinate a divalent metal cation: aspartate 300, serine 302, and serine 304. An MIDAS-like motif motif is present at residues 300 to 304 (DVSGS). Asparagine 389, asparagine 421, asparagine 510, asparagine 543, asparagine 627, and asparagine 864 each carry an N-linked (GlcNAc...) asparagine glycan. Cysteine 446 and cysteine 1101 are disulfide-bonded. In terms of domain architecture, Cache spans 488–577 (WTNVYEDALG…KPQTTNFREP (90 aa)). A helical transmembrane segment spans residues 1117–1137 (ASFPPSLGVLVSLQLLLLLGL). The Cytoplasmic portion of the chain corresponds to 1138 to 1154 (PPRPQPQVHSFAASRHL).

It belongs to the calcium channel subunit alpha-2/delta family. In terms of assembly, dimer formed of alpha-2-2 and delta-2 chains; disulfide-linked. Voltage-dependent calcium channels are multisubunit complexes, consisting of alpha-1 (CACNA1), alpha-2 (CACNA2D), beta (CACNB) and delta (CACNA2D) subunits in a 1:1:1:1 ratio. N-glycosylated. In terms of processing, may be proteolytically processed into subunits alpha-2-2 and delta-2 that are disulfide-linked. It is however unclear whether such cleavage really takes place in vivo and has a functional role. According to PubMed:11306709, it is processed, at least in vitro, while according to PubMed:17052222, it is only poorly processed in vivo. Predominantly expressed in brain in a restricted pattern. Also expressed at lower level in kidney and testis Not expressed in lung at any moment of development. In brain, it localizes to sections of P21 brain. Expressed at high level in the cerebellum, with moderate levels in medulla, pons, and striatum. Also expressed in cortex, hippocampus, habenula and nucleus reticularis thalami (nRT). Strongly expressed in cerebellar Purkinje cells.

The protein localises to the membrane. Its function is as follows. The alpha-2/delta subunit of voltage-dependent calcium channels regulates calcium current density and activation/inactivation kinetics of the calcium channel. Acts as a regulatory subunit for P/Q-type calcium channel (CACNA1A), N-type (CACNA1B), L-type (CACNA1C OR CACNA1D) and possibly T-type (CACNA1G). The sequence is that of Voltage-dependent calcium channel subunit alpha-2/delta-2 (Cacna2d2) from Mus musculus (Mouse).